The primary structure comprises 511 residues: GMP synthase [glutamine-hydrolyzing] (511 aa).

The Glutamine amidotransferase type-1 domain maps to 5 to 195 (PIVVLDFGSQ…AKHICGCEST (191 aa)). Cys82 serves as the catalytic Nucleophile. Active-site residues include His169 and Glu171. In terms of domain architecture, GMPS ATP-PPase spans 196–386 (WNMGSFAKEQ…LGLPKSMISR (191 aa)). 223–229 (SGGVDSS) provides a ligand contact to ATP.

As to quaternary structure, homodimer.

It carries out the reaction XMP + L-glutamine + ATP + H2O = GMP + L-glutamate + AMP + diphosphate + 2 H(+). It functions in the pathway purine metabolism; GMP biosynthesis; GMP from XMP (L-Gln route): step 1/1. In terms of biological role, catalyzes the synthesis of GMP from XMP. The protein is GMP synthase [glutamine-hydrolyzing] of Aliarcobacter butzleri (strain RM4018) (Arcobacter butzleri).